Reading from the N-terminus, the 125-residue chain is Small ribosomal subunit protein eS8 (125 aa).

The disordered stretch occupies residues 1 to 35 (MQWQGRSVRKPSGGRYHTSQGKKRTEIGRAPAETH).

This sequence belongs to the eukaryotic ribosomal protein eS8 family. In terms of assembly, part of the 30S ribosomal subunit.

The sequence is that of Small ribosomal subunit protein eS8 from Methanoculleus marisnigri (strain ATCC 35101 / DSM 1498 / JR1).